A 411-amino-acid polypeptide reads, in one-letter code: LL-diaminopimelate aminotransferase (411 aa).

Substrate is bound by residues Y15 and G42. Pyridoxal 5'-phosphate-binding positions include Y72, 105–106 (SK), Y129, N186, Y217, and 245–247 (SFS). Substrate is bound by residues K106, Y129, and N186. K248 bears the N6-(pyridoxal phosphate)lysine mark. Positions 256 and 287 each coordinate pyridoxal 5'-phosphate. Substrate is bound by residues N287 and R382.

It belongs to the class-I pyridoxal-phosphate-dependent aminotransferase family. LL-diaminopimelate aminotransferase subfamily. In terms of assembly, homodimer. Requires pyridoxal 5'-phosphate as cofactor.

The enzyme catalyses (2S,6S)-2,6-diaminopimelate + 2-oxoglutarate = (S)-2,3,4,5-tetrahydrodipicolinate + L-glutamate + H2O + H(+). It participates in amino-acid biosynthesis; L-lysine biosynthesis via DAP pathway; LL-2,6-diaminopimelate from (S)-tetrahydrodipicolinate (aminotransferase route): step 1/1. In terms of biological role, involved in the synthesis of meso-diaminopimelate (m-DAP or DL-DAP), required for both lysine and peptidoglycan biosynthesis. Catalyzes the direct conversion of tetrahydrodipicolinate to LL-diaminopimelate. Is also able to use meso-diaminopimelate, lysine or ornithine as substrates. This Protochlamydia amoebophila (strain UWE25) protein is LL-diaminopimelate aminotransferase.